The primary structure comprises 91 residues: MARSVWKGPFVELSLLRKAEDAQEASSNKPIKTWSRRSTILPQFVGLTFNVYNGHKFIPVSVSEEMVGHKLGEFAPTRTFPGHAADKKGKR.

Belongs to the universal ribosomal protein uS19 family.

Functionally, protein S19 forms a complex with S13 that binds strongly to the 16S ribosomal RNA. The protein is Small ribosomal subunit protein uS19 of Erythrobacter litoralis (strain HTCC2594).